The sequence spans 178 residues: ATP synthase subunit delta (178 aa).

This sequence belongs to the ATPase delta chain family. F-type ATPases have 2 components, F(1) - the catalytic core - and F(0) - the membrane proton channel. F(1) has five subunits: alpha(3), beta(3), gamma(1), delta(1), epsilon(1). F(0) has three main subunits: a(1), b(2) and c(10-14). The alpha and beta chains form an alternating ring which encloses part of the gamma chain. F(1) is attached to F(0) by a central stalk formed by the gamma and epsilon chains, while a peripheral stalk is formed by the delta and b chains.

The protein resides in the cell inner membrane. Its function is as follows. F(1)F(0) ATP synthase produces ATP from ADP in the presence of a proton or sodium gradient. F-type ATPases consist of two structural domains, F(1) containing the extramembraneous catalytic core and F(0) containing the membrane proton channel, linked together by a central stalk and a peripheral stalk. During catalysis, ATP synthesis in the catalytic domain of F(1) is coupled via a rotary mechanism of the central stalk subunits to proton translocation. This protein is part of the stalk that links CF(0) to CF(1). It either transmits conformational changes from CF(0) to CF(1) or is implicated in proton conduction. In Ectopseudomonas mendocina (strain ymp) (Pseudomonas mendocina), this protein is ATP synthase subunit delta.